Here is a 132-residue protein sequence, read N- to C-terminus: Small ribosomal subunit protein uS11 (132 aa).

Residues 1–24 (MAAPKQAARKPRRRDRKSVPVGQA) are disordered. Residues 7 to 16 (AARKPRRRDR) are compositionally biased toward basic residues.

It belongs to the universal ribosomal protein uS11 family. Part of the 30S ribosomal subunit. Interacts with proteins S7 and S18. Binds to IF-3.

Located on the platform of the 30S subunit, it bridges several disparate RNA helices of the 16S rRNA. Forms part of the Shine-Dalgarno cleft in the 70S ribosome. This chain is Small ribosomal subunit protein uS11, found in Bifidobacterium longum (strain DJO10A).